The sequence spans 396 residues: Putative isochorismate synthase (396 aa).

It belongs to the isochorismate synthase family.

It carries out the reaction chorismate = isochorismate. It functions in the pathway siderophore biosynthesis; amonabactin biosynthesis. Its function is as follows. Involved in the synthesis of amonabactin, a phenolate siderophore containing 2,3-dihydroxybenzoic acid (2,3-DHB). In Aeromonas hydrophila, this protein is Putative isochorismate synthase (amoA).